A 166-amino-acid chain; its full sequence is Large ribosomal subunit protein uL10 (166 aa).

This sequence belongs to the universal ribosomal protein uL10 family. As to quaternary structure, part of the ribosomal stalk of the 50S ribosomal subunit. The N-terminus interacts with L11 and the large rRNA to form the base of the stalk. The C-terminus forms an elongated spine to which L12 dimers bind in a sequential fashion forming a multimeric L10(L12)X complex.

In terms of biological role, forms part of the ribosomal stalk, playing a central role in the interaction of the ribosome with GTP-bound translation factors. In Pseudomonas fluorescens (strain Pf0-1), this protein is Large ribosomal subunit protein uL10.